The sequence spans 295 residues: Protoheme IX farnesyltransferase (295 aa).

The next 9 helical transmembrane spans lie at 30 to 50 (LVVLTGVTGIIIAPGNIHPLI), 51 to 71 (AVISTLCIALGSGAAGAINMW), 93 to 115 (ISRSSALEVGLVLSFISVTIMMI), 119 to 136 (YISGILLAISIGFYIYVY), 148 to 168 (IVIGGAAGALPPIIGWTSVTG), 175 to 195 (LVLFLIIFMWTPPHFWALSLL), 219 to 239 (IHILVYSILLFPITLLPGLFL), 244 to 264 (LYEITAIPLGLMFVVQAFQVF), and 275 to 295 (MFTYSIIYLFILFTCIMLSSF).

It belongs to the UbiA prenyltransferase family. Protoheme IX farnesyltransferase subfamily.

It localises to the cell inner membrane. The enzyme catalyses heme b + (2E,6E)-farnesyl diphosphate + H2O = Fe(II)-heme o + diphosphate. The protein operates within porphyrin-containing compound metabolism; heme O biosynthesis; heme O from protoheme: step 1/1. In terms of biological role, converts heme B (protoheme IX) to heme O by substitution of the vinyl group on carbon 2 of heme B porphyrin ring with a hydroxyethyl farnesyl side group. The polypeptide is Protoheme IX farnesyltransferase (Ehrlichia ruminantium (strain Welgevonden)).